A 128-amino-acid chain; its full sequence is Probable 4-amino-4-deoxy-L-arabinose-phosphoundecaprenol flippase subunit ArnF (128 aa).

A helical membrane pass occupies residues 1–21 (MGLMWGLFSVIIASAAQLSLG). At 22-35 (YAASHLPPMTQFWD) the chain is on the periplasmic side. Residues 36–56 (FIAAFFAFGPGARMLVVGLVG) traverse the membrane as a helical segment. The Cytoplasmic segment spans residues 57 to 76 (YLLSVFCWYKALHQLALSKA). Residues 77 to 97 (YALLSMSYVLVWIASMVLPGW) traverse the membrane as a helical segment. Over 98–100 (EGT) the chain is Periplasmic. The chain crosses the membrane as a helical span at residues 101–121 (FSLKALLGVACIMSGLMLIFL). At 122–128 (PTTKQRY) the chain is on the cytoplasmic side.

Belongs to the ArnF family. Heterodimer of ArnE and ArnF.

It is found in the cell inner membrane. It participates in bacterial outer membrane biogenesis; lipopolysaccharide biosynthesis. Its function is as follows. Translocates 4-amino-4-deoxy-L-arabinose-phosphoundecaprenol (alpha-L-Ara4N-phosphoundecaprenol) from the cytoplasmic to the periplasmic side of the inner membrane. This chain is Probable 4-amino-4-deoxy-L-arabinose-phosphoundecaprenol flippase subunit ArnF, found in Escherichia fergusonii (strain ATCC 35469 / DSM 13698 / CCUG 18766 / IAM 14443 / JCM 21226 / LMG 7866 / NBRC 102419 / NCTC 12128 / CDC 0568-73).